We begin with the raw amino-acid sequence, 217 residues long: Adenylate kinase (217 aa).

ATP is bound at residue 10 to 15; the sequence is GAGKGT. The interval 30–59 is NMP; the sequence is STGDMFRAAMKEETPLGLEAKSYIDKGELV. AMP contacts are provided by residues threonine 31, arginine 36, 57-59, 85-88, and glutamine 92; these read ELV and GFPR. The interval 126–163 is LID; it reads GRRICSVCGTTYHLVFNPPKTPGICDKDGGELYQRADD. Arginine 127 contributes to the ATP binding site. Zn(2+) is bound by residues cysteine 130 and cysteine 133. 136-137 contributes to the ATP binding site; sequence TY. Zn(2+) contacts are provided by cysteine 150 and aspartate 153. AMP-binding residues include arginine 160 and arginine 171. ATP is bound at residue glutamine 199.

Belongs to the adenylate kinase family. As to quaternary structure, monomer.

The protein localises to the cytoplasm. It catalyses the reaction AMP + ATP = 2 ADP. The protein operates within purine metabolism; AMP biosynthesis via salvage pathway; AMP from ADP: step 1/1. In terms of biological role, catalyzes the reversible transfer of the terminal phosphate group between ATP and AMP. Plays an important role in cellular energy homeostasis and in adenine nucleotide metabolism. In Bacillus subtilis (strain 168), this protein is Adenylate kinase.